A 1028-amino-acid polypeptide reads, in one-letter code: MADKTPGGSQKASSKTRSSDVHSSGSSDAHMDASGPSDSDMPSRTRPKSPRKHNYRNESARESLCDSPHQNLSRPLLENKLKAFSIGKMSTAKRTLSKKEQEELKKKEDEKAAAEIYEEFLAAFEGSDGNKVKTFVRGGVVNAAKEEHETDEKRGKIYKPSSRFADQKNPPNQSSNERPPSLLVIETKKPPLKKGEKEKKKSNLELFKEELKQIQEERDERHKTKGRLSRFEPPQSDSDGQRRSMDAPSRRNRSSVLDDYAPGSHDVGDPSTTNLYLGNINPQMNEEMLCQEFGRFGPLASVKIMWPRTDEERARERNCGFVAFMNRRDAERALKNLNGKMIMSFEMKLGWGKAVPIPPHPIYIPPSMMEHTLPPPPSGLPFNAQPRERLKNPNAPMLPPPKNKEDFEKTLSQAIVKVVIPTERNLLALIHRMIEFVVREGPMFEAMIMNREINNPMFRFLFENQTPAHVYYRWKLYSILQGDSPTKWRTEDFRMFKNGSFWRPPPLNPYLHGMSEEQETEAFVEEPSKKGALKEEQRDKLEEILRGLTPRKNDIGDAMVFCLNNAEAAEEIVDCITESLSILKTPLPKKIARLYLVSDVLYNSSAKVANASYYRKFFETKLCQIFSDLNATYRTIQGHLQSENFKQRVMTCFRAWEDWAIYPEPFLIKLQNIFLGLVNIIEEKETEDVPDDLDGAPIEEELDGAPLEDVDGIPIDATPIDDLDGVPIKSLDDDLDGVPLDATEDSKKNEPIFKVAPSKWEAVDESELEAQAVTTSKWELFDQHEESEEEENQNQEEESEDEEDTQSSKSEEHHLYSNPIKEEMTESKFSKYSEMSEEKRAKLREIELKVMKFQDELESGKRPKKPGQSFQEQVEHYRDKLLQREKEKELERERERDKKDKEKLESRSKDEKEKDECTPTRKERKRRHSTSPSPSRSSSGRRVKSPSPKSERSERSERSHKESSRSRSSHKDSPRDVSKKAKRSPSGSRTPKRSRRSRSRSPKKSGKKSRSQSRSPHRSHKKSKKNKH.

Disordered stretches follow at residues 1–111 (MADK…EDEK) and 141–272 (VNAA…DPST). At Ala2 the chain carries N-acetylalanine. The span at 7-16 (GGSQKASSKT) shows a compositional bias: polar residues. The segment covering 45–54 (TRPKSPRKHN) has biased composition (basic residues). Basic and acidic residues predominate over residues 55–64 (YRNESARESL). Phosphoserine is present on Ser67. Residue Lys80 forms a Glycyl lysine isopeptide (Lys-Gly) (interchain with G-Cter in SUMO2) linkage. A coiled-coil region spans residues 92 to 121 (AKRTLSKKEQEELKKKEDEKAAAEIYEEFL). Basic and acidic residues-rich tracts occupy residues 97–111 (SKKEQEELKKKEDEK) and 144–155 (AKEEHETDEKRG). Glycyl lysine isopeptide (Lys-Gly) (interchain with G-Cter in SUMO2) cross-links involve residues Lys145 and Lys168. The span at 169 to 178 (NPPNQSSNER) shows a compositional bias: polar residues. Over residues 186–222 (ETKKPPLKKGEKEKKKSNLELFKEELKQIQEERDERH) the composition is skewed to basic and acidic residues. Residues 192–232 (LKKGEKEKKKSNLELFKEELKQIQEERDERHKTKGRLSRFE) adopt a coiled-coil conformation. Residue Ser202 is modified to Phosphoserine. Lys208 is covalently cross-linked (Glycyl lysine isopeptide (Lys-Gly) (interchain with G-Cter in SUMO2)). At Ser236 the chain carries Phosphoserine. The span at 239-249 (DGQRRSMDAPS) shows a compositional bias: basic and acidic residues. In terms of domain architecture, RRM spans 273 to 354 (TNLYLGNINP…FEMKLGWGKA (82 aa)). The SURP motif repeat unit spans residues 429 to 472 (LIHRMIEFVVREGPMFEAMIMNREINNPMFRFLFENQTPAHVYY). Residue Ser484 is modified to Phosphoserine. In terms of domain architecture, CID spans 533-678 (LKEEQRDKLE…KLQNIFLGLV (146 aa)). Thr718 is subject to Phosphothreonine. Residues Lys747 and Lys748 each participate in a glycyl lysine isopeptide (Lys-Gly) (interchain with G-Cter in SUMO2) cross-link. Position 759 is an N6-acetyllysine; alternate (Lys759). Residue Lys759 forms a Glycyl lysine isopeptide (Lys-Gly) (interchain with G-Cter in SUMO2); alternate linkage. 2 disordered regions span residues 777 to 840 (KWEL…EEKR) and 854 to 1028 (QDEL…KNKH). A coiled-coil region spans residues 779–809 (ELFDQHEESEEEENQNQEEESEDEEDTQSSK). The segment covering 785 to 805 (EESEEEENQNQEEESEDEEDT) has biased composition (acidic residues). 3 positions are modified to phosphoserine: Ser787, Ser799, and Ser810. Basic and acidic residues-rich tracts occupy residues 809–840 (KSEEHHLYSNPIKEEMTESKFSKYSEMSEEKR) and 873–921 (QVEH…TPTR). Residues Lys821, Lys828, and Lys831 each participate in a glycyl lysine isopeptide (Lys-Gly) (interchain with G-Cter in SUMO2) cross-link. A coiled-coil region spans residues 836–914 (SEEKRAKLRE…ESRSKDEKEK (79 aa)). Thr930 is subject to Phosphothreonine. Phosphoserine occurs at positions 945 and 947. Over residues 949–979 (KSERSERSERSHKESSRSRSSHKDSPRDVSK) the composition is skewed to basic and acidic residues. Residues 990-1028 (TPKRSRRSRSRSPKKSGKKSRSQSRSPHRSHKKSKKNKH) show a composition bias toward basic residues.

The protein belongs to the splicing factor SR family. Interacts with ERBB4.

The protein resides in the nucleus. This is U2 snRNP-associated SURP motif-containing protein (U2SURP) from Pongo abelii (Sumatran orangutan).